The following is a 205-amino-acid chain: Deoxyuridine 5'-triphosphate nucleotidohydrolase (205 aa).

Residue S54 is modified to Phosphoserine. Substrate contacts are provided by residues 126–128 (RSG), 140–143 (GVID), G151, and 199–200 (FG).

The protein belongs to the dUTPase family. Homotrimer. Mg(2+) is required as a cofactor. Expressed in all tissues examined. Higher levels in heart and kidney.

It is found in the cytoplasm. The protein resides in the nucleus. It carries out the reaction dUTP + H2O = dUMP + diphosphate + H(+). It functions in the pathway pyrimidine metabolism; dUMP biosynthesis; dUMP from dCTP (dUTP route): step 2/2. Its function is as follows. Catalyzes the cleavage of 2'-deoxyuridine 5'-triphosphate (dUTP) into 2'-deoxyuridine 5'-monophosphate (dUMP) and inorganic pyrophosphate and through its action efficiently prevents uracil misincorporation into DNA and at the same time provides dUMP, the substrate for de novo thymidylate biosynthesis. Inhibits peroxisome proliferator-activated receptor (PPAR) activity by binding of its N-terminal to PPAR, preventing the latter's dimerization with retinoid X receptor. Essential for embryonic development. This is Deoxyuridine 5'-triphosphate nucleotidohydrolase (Dut) from Rattus norvegicus (Rat).